Here is a 555-residue protein sequence, read N- to C-terminus: Phosphoglucomutase (555 aa).

Alpha-D-glucose 1,6-bisphosphate-binding residues include Arg22 and Ser114. The active-site Phosphoserine intermediate is the Ser114. Positions 114, 279, 281, and 283 each coordinate Mg(2+). At Ser114 the chain carries Phosphoserine. Residues Asp283, Arg284, Thr347, Glu366, Ser368, and Lys379 each contribute to the alpha-D-glucose 1,6-bisphosphate site.

Belongs to the phosphohexose mutase family. In terms of assembly, monomer. It depends on Mg(2+) as a cofactor.

It localises to the cytoplasm. It carries out the reaction alpha-D-glucose 1-phosphate = alpha-D-glucose 6-phosphate. It catalyses the reaction O-phospho-L-seryl-[protein] + alpha-D-glucose 1-phosphate = alpha-D-glucose 1,6-bisphosphate + L-seryl-[protein]. The catalysed reaction is alpha-D-glucose 1,6-bisphosphate + L-seryl-[protein] = O-phospho-L-seryl-[protein] + alpha-D-glucose 6-phosphate. Catalyzes the reversible isomerization of alpha-D-glucose 1-phosphate to alpha-D-glucose 6-phosphate. The mechanism proceeds via the intermediate compound alpha-D-glucose 1,6-bisphosphate. Key enzyme in hexose metabolism. The reverse reaction is an essential step for biosynthesis because glucose 1-phosphate is the starting point for the synthesis of UDP-glucose, which acts as a precursor for the synthesis of oligosaccharides and trehalose. The chain is Phosphoglucomutase (pgmA) from Aspergillus oryzae (strain ATCC 42149 / RIB 40) (Yellow koji mold).